The sequence spans 98 residues: NADH-ubiquinone oxidoreductase chain 4L (98 aa).

The next 3 membrane-spanning stretches (helical) occupy residues 1-21, 29-49, and 61-81; these read MSLV…GLLM, SLLC…LMIL, and IILL…LVMV.

The protein belongs to the complex I subunit 4L family. As to quaternary structure, core subunit of respiratory chain NADH dehydrogenase (Complex I) which is composed of 45 different subunits.

The protein resides in the mitochondrion inner membrane. The enzyme catalyses a ubiquinone + NADH + 5 H(+)(in) = a ubiquinol + NAD(+) + 4 H(+)(out). Its function is as follows. Core subunit of the mitochondrial membrane respiratory chain NADH dehydrogenase (Complex I) which catalyzes electron transfer from NADH through the respiratory chain, using ubiquinone as an electron acceptor. Part of the enzyme membrane arm which is embedded in the lipid bilayer and involved in proton translocation. The sequence is that of NADH-ubiquinone oxidoreductase chain 4L (MT-ND4L) from Pantholops hodgsonii (Chiru).